Here is a 307-residue protein sequence, read N- to C-terminus: 4-hydroxythreonine-4-phosphate dehydrogenase (307 aa).

His126 and Thr127 together coordinate substrate. 3 residues coordinate a divalent metal cation: His156, His195, and His251. Substrate-binding residues include Lys259, Asn268, and Arg277.

Belongs to the PdxA family. Homodimer. Zn(2+) serves as cofactor. Requires Mg(2+) as cofactor. The cofactor is Co(2+).

The protein localises to the cytoplasm. It carries out the reaction 4-(phosphooxy)-L-threonine + NAD(+) = 3-amino-2-oxopropyl phosphate + CO2 + NADH. It participates in cofactor biosynthesis; pyridoxine 5'-phosphate biosynthesis; pyridoxine 5'-phosphate from D-erythrose 4-phosphate: step 4/5. Catalyzes the NAD(P)-dependent oxidation of 4-(phosphooxy)-L-threonine (HTP) into 2-amino-3-oxo-4-(phosphooxy)butyric acid which spontaneously decarboxylates to form 3-amino-2-oxopropyl phosphate (AHAP). The protein is 4-hydroxythreonine-4-phosphate dehydrogenase of Helicobacter pylori (strain P12).